The chain runs to 239 residues: Small ribosomal subunit protein uS3c (239 aa).

A KH type-2 domain is found at 43-139; that stretch reads IKNYIQKNRK…RFNISIEKVK (97 aa). The tract at residues 50–74 is disordered; it reads NRKKGSNRKIESDSSSEVITHNRKM.

Belongs to the universal ribosomal protein uS3 family. Part of the 30S ribosomal subunit.

The protein resides in the plastid. The protein localises to the chloroplast. The protein is Small ribosomal subunit protein uS3c (rps3) of Hordeum vulgare (Barley).